The primary structure comprises 547 residues: 4-coumarate-CoA ligase 1 (547 aa).

ATP is bound by residues S190–T194, H238, A310–P312, Q332–G333, T337, D421, R436, and K527. The interval E263–Q332 is SBD1. The interval G333–Y400 is SBD2.

Belongs to the ATP-dependent AMP-binding enzyme family. Mostly expressed in stems, and, to a lower extent, in bulbs.

The catalysed reaction is (E)-4-coumarate + ATP + CoA = (E)-4-coumaroyl-CoA + AMP + diphosphate. It functions in the pathway phytoalexin biosynthesis; 3,4',5-trihydroxystilbene biosynthesis; 3,4',5-trihydroxystilbene from trans-4-coumarate: step 1/2. Functionally, produces CoA thioesters of a variety of hydroxy- and methoxy-substituted cinnamic acids, which are used to synthesize several phenylpropanoid-derived compounds, including anthocyanins, flavonoids, isoflavonoids, coumarins, lignin, suberin and wall-bound phenolics. This Narcissus pseudonarcissus (Daffodil) protein is 4-coumarate-CoA ligase 1.